Here is a 265-residue protein sequence, read N- to C-terminus: Hydroxyethylthiazole kinase (265 aa).

Met-55 lines the substrate pocket. Positions 130 and 176 each coordinate ATP. Residue Gly-203 participates in substrate binding.

This sequence belongs to the Thz kinase family. It depends on Mg(2+) as a cofactor.

It carries out the reaction 5-(2-hydroxyethyl)-4-methylthiazole + ATP = 4-methyl-5-(2-phosphooxyethyl)-thiazole + ADP + H(+). The protein operates within cofactor biosynthesis; thiamine diphosphate biosynthesis; 4-methyl-5-(2-phosphoethyl)-thiazole from 5-(2-hydroxyethyl)-4-methylthiazole: step 1/1. Catalyzes the phosphorylation of the hydroxyl group of 4-methyl-5-beta-hydroxyethylthiazole (THZ). The chain is Hydroxyethylthiazole kinase from Leptospira interrogans serogroup Icterohaemorrhagiae serovar Lai (strain 56601).